We begin with the raw amino-acid sequence, 251 residues long: MNLNSIPAFDDNYIWVLNDEAGRCLIVDPGDAEPVLNAISANNWQPEAIFLTHHHHDHVGGVKELVEKFPQIVVYGPQETQDKGTTQVVKDGETAFVLGHEFSVIATPGHTLGHICYFSKPYLFCGDTLFSGGCGRLFEGTPSQMYQSIKKLSALPDDTLVCCAHEYTLSNMKFALSILPHDLSINDYYRKVKELRAKNQITLPVILKNERQINVFLRTEDIDLINVINEETLLQQPEERFAWLRSKKDRF.

Zn(2+) contacts are provided by histidine 53, histidine 55, aspartate 57, histidine 58, histidine 110, aspartate 127, and histidine 165.

The protein belongs to the metallo-beta-lactamase superfamily. Glyoxalase II family. In terms of assembly, monomer. Zn(2+) is required as a cofactor.

The catalysed reaction is an S-(2-hydroxyacyl)glutathione + H2O = a 2-hydroxy carboxylate + glutathione + H(+). Its pathway is secondary metabolite metabolism; methylglyoxal degradation; (R)-lactate from methylglyoxal: step 2/2. Thiolesterase that catalyzes the hydrolysis of S-D-lactoyl-glutathione to form glutathione and D-lactic acid. This Escherichia coli O45:K1 (strain S88 / ExPEC) protein is Hydroxyacylglutathione hydrolase.